The primary structure comprises 186 residues: uncharacterized protein (186 aa).

A signal peptide spans 1 to 28 (MSVKPAALFRISAALAVAGLGASLIASA).

This is an uncharacterized protein from Rhizobium meliloti (strain 1021) (Ensifer meliloti).